A 270-amino-acid polypeptide reads, in one-letter code: Diaminopimelate epimerase (270 aa).

Residues Asn15, Gln49, and Asn66 each contribute to the substrate site. Cys75 (proton donor) is an active-site residue. Substrate contacts are provided by residues Gly76–Asn77, Asn155, Asn187, and Glu204–Arg205. Catalysis depends on Cys213, which acts as the Proton acceptor. Gly214 to Ser215 contributes to the substrate binding site.

This sequence belongs to the diaminopimelate epimerase family. Homodimer.

The protein localises to the cytoplasm. It catalyses the reaction (2S,6S)-2,6-diaminopimelate = meso-2,6-diaminopimelate. It functions in the pathway amino-acid biosynthesis; L-lysine biosynthesis via DAP pathway; DL-2,6-diaminopimelate from LL-2,6-diaminopimelate: step 1/1. Catalyzes the stereoinversion of LL-2,6-diaminopimelate (L,L-DAP) to meso-diaminopimelate (meso-DAP), a precursor of L-lysine and an essential component of the bacterial peptidoglycan. This Rickettsia typhi (strain ATCC VR-144 / Wilmington) protein is Diaminopimelate epimerase.